Reading from the N-terminus, the 445-residue chain is UDP-N-acetylmuramate--L-alanine ligase (445 aa).

108-114 provides a ligand contact to ATP; sequence GSDGKTT.

It belongs to the MurCDEF family.

The protein localises to the cytoplasm. The catalysed reaction is UDP-N-acetyl-alpha-D-muramate + L-alanine + ATP = UDP-N-acetyl-alpha-D-muramoyl-L-alanine + ADP + phosphate + H(+). It participates in cell wall biogenesis; peptidoglycan biosynthesis. Cell wall formation. The protein is UDP-N-acetylmuramate--L-alanine ligase of Pseudothermotoga lettingae (strain ATCC BAA-301 / DSM 14385 / NBRC 107922 / TMO) (Thermotoga lettingae).